A 283-amino-acid polypeptide reads, in one-letter code: MAVPPTYADLGKSARDVFTKGYGFGLIKLDLKTKSENGLEFTSSGSANTETTKVNGSLETKYRWTEYGLTFTEKWNTDNTLGTEITVEDQLARGLKLTFDSSFSPNTGKKNAKIKTGYKREHINLGCDVDFDIAGPSIRGALVLGYEGWLAGYQMNFETSKSRVTQSNFAVGYKTDEFQLHTNVNDGTEFGGSIYQKVNKKLETAVNLAWTAGNSNTRFGIAAKYQVDPDACFSAKVNNSSLIGLGYTQTLKPGIKLTLSALLDGKNVNAGGHKLGLGLEFQA.

Ala2 carries the N-acetylalanine modification. Residue Lys12 participates in ATP binding. Residue Lys12 forms a Glycyl lysine isopeptide (Lys-Gly) (interchain with G-Cter in ubiquitin) linkage. Ser13 is subject to Phosphoserine. Thr19 carries the post-translational modification Phosphothreonine. An ATP-binding site is contributed by Lys20. Lys20 carries the N6-acetyllysine; alternate modification. N6-succinyllysine; alternate is present on Lys20. A Glycyl lysine isopeptide (Lys-Gly) (interchain with G-Cter in ubiquitin); alternate cross-link involves residue Lys20. The next 2 beta stranded transmembrane spans lie at 26-35 (LIKLDLKTKS) and 39-47 (LEFTSSGSA). Glycyl lysine isopeptide (Lys-Gly) (interchain with G-Cter in ubiquitin) cross-links involve residues Lys53 and Lys61. A beta stranded transmembrane segment spans residues 54–64 (VNGSLETKYRW). Tyr67 carries the post-translational modification Phosphotyrosine. A run of 3 beta stranded transmembrane segments spans residues 69–76 (LTFTEKWN), 80–89 (TLGTEITVED), and 95–104 (LKLTFDSSFS). Thr107 carries the phosphothreonine modification. Lys109 bears the N6-acetyllysine; alternate mark. Lys109 is covalently cross-linked (Glycyl lysine isopeptide (Lys-Gly) (interchain with G-Cter in ubiquitin); alternate). A Glycyl lysine isopeptide (Lys-Gly) (interchain with G-Cter in ubiquitin) cross-link involves residue Lys110. 4 beta stranded membrane passes run 111-120 (NAKIKTGYKR), 123-130 (INLGCDVD), 137-145 (SIRGALVLG), and 150-158 (LAGYQMNFE). Ser137 is subject to Phosphoserine. Lys161 is covalently cross-linked (Glycyl lysine isopeptide (Lys-Gly) (interchain with G-Cter in ubiquitin)). 6 consecutive transmembrane segments (beta stranded) span residues 163 to 175 (RVTQSNFAVGYKT), 178 to 185 (FQLHTNVN), 189 to 198 (EFGGSIYQKV), 202 to 211 (LETAVNLAWT), 218 to 227 (RFGIAAKYQV), and 231 to 238 (ACFSAKVN). At Ser193 the chain carries Phosphoserine; by NEK1. Ser240 bears the Phosphoserine mark. NAD(+) is bound at residue 242-244 (LIG). A beta stranded membrane pass occupies residues 242–251 (LIGLGYTQTL). At Lys252 the chain carries N6-acetyllysine. The beta stranded transmembrane segment at 254–263 (GIKLTLSALL) threads the bilayer. An NAD(+)-binding site is contributed by 260 to 264 (SALLD). Lys266 is subject to N6-acetyllysine; alternate. A Glycyl lysine isopeptide (Lys-Gly) (interchain with G-Cter in ubiquitin); alternate cross-link involves residue Lys266. A beta stranded transmembrane segment spans residues 273–282 (HKLGLGLEFQ). A Glycyl lysine isopeptide (Lys-Gly) (interchain with G-Cter in ubiquitin) cross-link involves residue Lys274.

This sequence belongs to the eukaryotic mitochondrial porin family. As to quaternary structure, homodimer and homotrimer; in response to cyclic AMP or calcium; oligomerization is required for scramblase activity. Component of the mitochondrial permeability transition pore complex (mPTPC), at least composed of SPG7, VDAC1 and PPIF. Interacts with SPG7, NIPSNAP2 and SLC25A30. Interacts with hexokinases including HK1. The HK1-VDAC1 complex interacts with ATF2. Interacts with BCL2L1. Interacts with BAK1. Interacts with RTL10/BOP (via BH3 domain). Interacts with amyloid-beta and APP; induces VDAC1 dephosphorylation. Interacts with TMEM41B. Interacts with BCAP31. Interacts with HSPA9; this interaction couples ITPR1 to VDAC1. In terms of processing, phosphorylation at Ser-193 by NEK1 promotes the closed conformational state preventing excessive mitochondrial membrane permeability and subsequent apoptotic cell death after injury. Phosphorylation by the AKT-GSK3B axis stabilizes the protein probably by preventing ubiquitin-mediated proteasomal degradation. Ubiquitinated. Undergoes monoubiquitination and polyubiquitination by PRKN; monoubiquitination at Lys-274 inhibits apoptosis, whereas polyubiquitination leads to its degradation and promotes mitophagy. Deubiquitinated by USP30. Widely expressed. High levels in heart and kidney with lower levels in brain and ascitic tumor. Very low levels in liver.

The protein localises to the mitochondrion outer membrane. It is found in the cell membrane. The protein resides in the membrane raft. It catalyses the reaction Ca(2+)(in) = Ca(2+)(out). The enzyme catalyses Na(+)(in) = Na(+)(out). It carries out the reaction chloride(in) = chloride(out). The catalysed reaction is Mg(2+)(in) = Mg(2+)(out). It catalyses the reaction K(+)(in) = K(+)(out). The enzyme catalyses ATP(in) = ATP(out). It carries out the reaction L-glutamate(out) = L-glutamate(in). The catalysed reaction is dopamine(out) = dopamine(in). It catalyses the reaction acetylcholine(in) = acetylcholine(out). The enzyme catalyses Fe(III)-[cytochrome c](out) = Fe(III)-[cytochrome c](in). It carries out the reaction a 1,2-diacyl-sn-glycero-3-phosphocholine(in) = a 1,2-diacyl-sn-glycero-3-phosphocholine(out). The catalysed reaction is a 1,2-diacyl-sn-glycero-3-phospho-L-serine(in) = a 1,2-diacyl-sn-glycero-3-phospho-L-serine(out). Its activity is regulated as follows. Inhibited by nitric oxide. Voltage-gated ion channel activity is inhibited by lanthanum(3+) and ruthenium red. Mitochondrial calcium transport is inhibited by lanthanum(3+), ruthenium red and Ru360. In terms of biological role, non-selective voltage-gated ion channel that mediates the transport of anions and cations through the mitochondrion outer membrane and plasma membrane. The channel at the outer mitochondrial membrane allows diffusion of small hydrophilic molecules; in the plasma membrane it is involved in cell volume regulation and apoptosis. It adopts an open conformation at low or zero membrane potential and a closed conformation at potentials above 30-40 mV. The open state has a weak anion selectivity whereas the closed state is cation-selective. Binds various signaling molecules, including the sphingolipid ceramide, the phospholipid phosphatidylcholine, and the sterols cholesterol and oxysterol. In depolarized mitochondria, acts downstream of PRKN and PINK1 to promote mitophagy or prevent apoptosis; polyubiquitination by PRKN promotes mitophagy, while monoubiquitination by PRKN decreases mitochondrial calcium influx which ultimately inhibits apoptosis. May participate in the formation of the permeability transition pore complex (PTPC) responsible for the release of mitochondrial products that triggers apoptosis. May mediate ATP export from cells. Part of a complex composed of HSPA9, ITPR1 and VDAC1 that regulates mitochondrial calcium-dependent apoptosis by facilitating calcium transport from the ER lumen to the mitochondria intermembrane space thus providing calcium for the downstream calcium channel MCU that directly releases it into mitochondria matrix. Catalyzes the scrambling of phospholipids across the outer mitochondrial membrane; the mechanism is unrelated to channel activity and is capable of translocating both anionic and zwitterionic phospholipids. The sequence is that of Non-selective voltage-gated ion channel VDAC1 from Rattus norvegicus (Rat).